A 400-amino-acid chain; its full sequence is Argininosuccinate synthase (400 aa).

9-17 (AYSGGLDTS) lines the ATP pocket. Position 87 (Tyr-87) interacts with L-citrulline. Gly-117 is an ATP binding site. The L-aspartate site is built by Thr-119, Asn-123, and Asp-124. Asn-123 is an L-citrulline binding site. Residues Arg-127, Ser-176, Ser-185, Glu-261, and Tyr-273 each contribute to the L-citrulline site.

This sequence belongs to the argininosuccinate synthase family. Type 1 subfamily. In terms of assembly, homotetramer.

The protein localises to the cytoplasm. It catalyses the reaction L-citrulline + L-aspartate + ATP = 2-(N(omega)-L-arginino)succinate + AMP + diphosphate + H(+). The protein operates within amino-acid biosynthesis; L-arginine biosynthesis; L-arginine from L-ornithine and carbamoyl phosphate: step 2/3. The sequence is that of Argininosuccinate synthase from Chlorobium phaeobacteroides (strain DSM 266 / SMG 266 / 2430).